A 269-amino-acid polypeptide reads, in one-letter code: Imidazole glycerol phosphate synthase subunit HisF (269 aa).

Catalysis depends on residues D23 and D142.

The protein belongs to the HisA/HisF family. In terms of assembly, heterodimer of HisH and HisF.

It is found in the cytoplasm. It carries out the reaction 5-[(5-phospho-1-deoxy-D-ribulos-1-ylimino)methylamino]-1-(5-phospho-beta-D-ribosyl)imidazole-4-carboxamide + L-glutamine = D-erythro-1-(imidazol-4-yl)glycerol 3-phosphate + 5-amino-1-(5-phospho-beta-D-ribosyl)imidazole-4-carboxamide + L-glutamate + H(+). Its pathway is amino-acid biosynthesis; L-histidine biosynthesis; L-histidine from 5-phospho-alpha-D-ribose 1-diphosphate: step 5/9. In terms of biological role, IGPS catalyzes the conversion of PRFAR and glutamine to IGP, AICAR and glutamate. The HisF subunit catalyzes the cyclization activity that produces IGP and AICAR from PRFAR using the ammonia provided by the HisH subunit. The polypeptide is Imidazole glycerol phosphate synthase subunit HisF (Bordetella pertussis (strain Tohama I / ATCC BAA-589 / NCTC 13251)).